An 879-amino-acid chain; its full sequence is Alanine--tRNA ligase (879 aa).

Zn(2+) is bound by residues His-567, His-571, Cys-669, and His-673.

This sequence belongs to the class-II aminoacyl-tRNA synthetase family. It depends on Zn(2+) as a cofactor.

Its subcellular location is the cytoplasm. The enzyme catalyses tRNA(Ala) + L-alanine + ATP = L-alanyl-tRNA(Ala) + AMP + diphosphate. In terms of biological role, catalyzes the attachment of alanine to tRNA(Ala) in a two-step reaction: alanine is first activated by ATP to form Ala-AMP and then transferred to the acceptor end of tRNA(Ala). Also edits incorrectly charged Ser-tRNA(Ala) and Gly-tRNA(Ala) via its editing domain. This chain is Alanine--tRNA ligase, found in Levilactobacillus brevis (strain ATCC 367 / BCRC 12310 / CIP 105137 / JCM 1170 / LMG 11437 / NCIMB 947 / NCTC 947) (Lactobacillus brevis).